The sequence spans 359 residues: MILNSSTEDGIKRIQDDCPKAGRHSYIFVMIPTLYSIIFVVGIFGNSLVVIVIYFYMKLKTVASVFLLNLALADICFLLTLPLWAVYTAMEYRWPFGNYLCKIASASVSFNLYASVFLLTCLSIDRYLAIVHPMKSRLRRTMLVAKVTCVIIWLMAGLASLPAVIHRNVFFIENTNITVCAFHYESQNSTLPIGLGLTKNILGFMFPFLIILTSYTLIWKALKKAYEIQKNKPRNDDIFKIIMAIVLFFFFSWVPHQIFTFLDVLIQLGIIHDCKISDIVDTAMPITICIAYFNNCLNPLFYGFLGKKFKKYFLQLLKYIPPKAKSHSTLSTKMSTLSYRPSDNVSSSAKKPVQCFEVE.

Residues 1 to 25 (MILNSSTEDGIKRIQDDCPKAGRHS) are Extracellular-facing. A glycan (N-linked (GlcNAc...) asparagine) is linked at N4. Angiotensin II is bound by residues Q15 and D17. 2 disulfides stabilise this stretch: C18/C274 and C101/C180. The helical transmembrane segment at 26–55 (YIFVMIPTLYSIIFVVGIFGNSLVVIVIYF) threads the bilayer. Topologically, residues 56–61 (YMKLKT) are cytoplasmic. The helical transmembrane segment at 62–89 (VASVFLLNLALADICFLLTLPLWAVYTA) threads the bilayer. At 90 to 98 (MEYRWPFGN) the chain is on the extracellular side. A helical transmembrane segment spans residues 99 to 125 (YLCKIASASVSFNLYASVFLLTCLSID). The Cytoplasmic portion of the chain corresponds to 126–141 (RYLAIVHPMKSRLRRT). A helical membrane pass occupies residues 142 to 165 (MLVAKVTCVIIWLMAGLASLPAVI). The Extracellular segment spans residues 166–190 (HRNVFFIENTNITVCAFHYESQNST). R167 contacts angiotensin II. An N-linked (GlcNAc...) asparagine glycan is attached at N176. The angiotensin II site is built by F182, H183, and Y184. The N-linked (GlcNAc...) asparagine glycan is linked to N188. The chain crosses the membrane as a helical span at residues 191 to 216 (LPIGLGLTKNILGFMFPFLIILTSYT). K199 provides a ligand contact to angiotensin II. At 217–239 (LIWKALKKAYEIQKNKPRNDDIF) the chain is on the cytoplasmic side. The helical transmembrane segment at 240-268 (KIIMAIVLFFFFSWVPHQIFTFLDVLIQL) threads the bilayer. At 269 to 278 (GIIHDCKISD) the chain is on the extracellular side. The helical transmembrane segment at 279 to 304 (IVDTAMPITICIAYFNNCLNPLFYGF) threads the bilayer. At 305 to 359 (LGKKFKKYFLQLLKYIPPKAKSHSTLSTKMSTLSYRPSDNVSSSAKKPVQCFEVE) the chain is on the cytoplasmic side. The span at 337-349 (LSYRPSDNVSSSA) shows a compositional bias: polar residues. Residues 337–359 (LSYRPSDNVSSSAKKPVQCFEVE) are disordered. C355 carries the S-palmitoyl cysteine lipid modification.

It belongs to the G-protein coupled receptor 1 family. Interacts with MAS1. Interacts with ARRB1. Interacts with FLNA (via filamin repeat 21); increases PKA-mediated phosphorylation of FLNA. C-terminal Ser or Thr residues may be phosphorylated. In terms of tissue distribution, expressed in liver, kidney, adrenal gland, heart and colon.

Its subcellular location is the cell membrane. Its function is as follows. Receptor for angiotensin II, a vasoconstricting peptide, which acts as a key regulator of blood pressure and sodium retention by the kidney. The activated receptor in turn couples to G-alpha proteins G(q) (GNAQ, GNA11, GNA14 or GNA15) and thus activates phospholipase C and increases the cytosolic Ca(2+) concentrations, which in turn triggers cellular responses such as stimulation of protein kinase C. The sequence is that of Type-1 angiotensin II receptor (AGTR1) from Cavia porcellus (Guinea pig).